The following is a 525-amino-acid chain: ATP synthase subunit alpha (525 aa).

171–178 provides a ligand contact to ATP; it reads GDRQTGKS.

The protein belongs to the ATPase alpha/beta chains family. F-type ATPases have 2 components, CF(1) - the catalytic core - and CF(0) - the membrane proton channel. CF(1) has five subunits: alpha(3), beta(3), gamma(1), delta(1), epsilon(1). CF(0) has three main subunits: a(1), b(2) and c(9-12). The alpha and beta chains form an alternating ring which encloses part of the gamma chain. CF(1) is attached to CF(0) by a central stalk formed by the gamma and epsilon chains, while a peripheral stalk is formed by the delta and b chains.

Its subcellular location is the cell inner membrane. It carries out the reaction ATP + H2O + 4 H(+)(in) = ADP + phosphate + 5 H(+)(out). In terms of biological role, produces ATP from ADP in the presence of a proton gradient across the membrane. The alpha chain is a regulatory subunit. This chain is ATP synthase subunit alpha, found in Flavobacterium johnsoniae (strain ATCC 17061 / DSM 2064 / JCM 8514 / BCRC 14874 / CCUG 350202 / NBRC 14942 / NCIMB 11054 / UW101) (Cytophaga johnsonae).